Consider the following 100-residue polypeptide: Small ribosomal subunit protein uS14 (100 aa).

The protein belongs to the universal ribosomal protein uS14 family. As to quaternary structure, part of the 30S ribosomal subunit. Contacts proteins S3 and S10.

In terms of biological role, binds 16S rRNA, required for the assembly of 30S particles and may also be responsible for determining the conformation of the 16S rRNA at the A site. This is Small ribosomal subunit protein uS14 from Prochlorococcus marinus (strain MIT 9301).